Consider the following 27-residue polypeptide: Phospholipase A2 taicatoxin (27 aa).

This sequence belongs to the phospholipase A2 family. Group I subfamily. Heterotrimer composed of an alpha-neurotoxin-like peptide of 8 kDa (AC P0CJ35), this neurotoxic phospholipase of 16 kDa and a serine protease inhibitor of 7 kDa (AC B7S4N9) at an approximate stoichiometry of 1:1:4; non-covalently linked. Requires Ca(2+) as cofactor. In terms of processing, contains 7 disulfide bonds. Expressed by the venom gland.

The protein resides in the secreted. It carries out the reaction a 1,2-diacyl-sn-glycero-3-phosphocholine + H2O = a 1-acyl-sn-glycero-3-phosphocholine + a fatty acid + H(+). Functionally, heterotrimer: blocks the voltage-dependent L-type calcium channels from the heart, and the small conductance calcium-activated potassium channels in the chromaffin cells and in the brain. Is very toxic to mice. Monomer: Snake venom phospholipase A2 (PLA2) that has neurotoxic activities. Voltage-dependently affects ionic currents in chick (Gallus domesticus) dorsal root ganglion cells. PLA2 catalyzes the calcium-dependent hydrolysis of the 2-acyl groups in 3-sn-phosphoglycerides. The polypeptide is Phospholipase A2 taicatoxin (Oxyuranus scutellatus scutellatus (Australian taipan)).